Consider the following 903-residue polypeptide: DNA mismatch repair protein MutS (903 aa).

655–662 (GPNMAGKS) serves as a coordination point for ATP.

It belongs to the DNA mismatch repair MutS family.

Its function is as follows. This protein is involved in the repair of mismatches in DNA. It is possible that it carries out the mismatch recognition step. This protein has a weak ATPase activity. This is DNA mismatch repair protein MutS from Caulobacter vibrioides (strain ATCC 19089 / CIP 103742 / CB 15) (Caulobacter crescentus).